The following is a 408-amino-acid chain: UDP-N-acetylglucosamine--dolichyl-phosphate N-acetylglucosaminephosphotransferase (408 aa).

At Met-1–Pro-10 the chain is on the lumenal side. A helical transmembrane segment spans residues Leu-11–Ala-38. Topologically, residues Ala-39 to Gln-58 are cytoplasmic. Residues Gln-44–Leu-46 and Glu-56 contribute to the UDP-N-acetyl-alpha-D-glucosamine site. The helical transmembrane segment at Gly-59–Phe-78 threads the bilayer. Residues Leu-79 to Pro-91 are Lumenal-facing. A helical transmembrane segment spans residues His-92–Leu-118. The Cytoplasmic segment spans residues Asn-119–Arg-121. A helical transmembrane segment spans residues Trp-122 to Asn-143. Residue Lys-125 coordinates dolichyl phosphate. Residues Phe-144–Gly-166 lie on the Lumenal side of the membrane. A glycan (N-linked (GlcNAc...) asparagine) is linked at Asn-146. Residues Ile-167 to Ile-186 form a helical membrane-spanning segment. Val-178–Ile-186 contacts dolichyl phosphate. Asn-185 contributes to the Mg(2+) binding site. Over Leu-187–Gly-192 the chain is Cytoplasmic. UDP-N-acetyl-alpha-D-glucosamine is bound at residue Asn-191. Residues Leu-193–Leu-213 traverse the membrane as a helical segment. The Lumenal segment spans residues Asp-214–Arg-218. Residues Asp-219–Asn-242 form a helical membrane-spanning segment. The Cytoplasmic segment spans residues Trp-243–Val-250. A helical membrane pass occupies residues Gly-251–Gly-269. Asp-252 is a Mg(2+) binding site. At His-270–Phe-271 the chain is on the lumenal side. A helical transmembrane segment spans residues Ser-272–Leu-293. Residues Leu-294–His-375 are Cytoplasmic-facing. Arg-301–Arg-303 is a UDP-N-acetyl-alpha-D-glucosamine binding site. Residues Glu-376–Gln-400 form a helical membrane-spanning segment. Over Leu-401–Val-408 the chain is Lumenal.

This sequence belongs to the glycosyltransferase 4 family. Homodimer. Mg(2+) serves as cofactor.

It localises to the endoplasmic reticulum membrane. It catalyses the reaction a di-trans,poly-cis-dolichyl phosphate + UDP-N-acetyl-alpha-D-glucosamine = an N-acetyl-alpha-D-glucosaminyl-diphospho-di-trans,poly-cis-dolichol + UMP. Its pathway is protein modification; protein glycosylation. Inhibited by natural nucleoside antibiotic tunicamycin, which acts as a structural analog and competitor of UDP-GlcNAc. Activated by Man-P-Dol. Activated by manganese. Inhibited by diumycin. Its function is as follows. UDP-N-acetylglucosamine--dolichyl-phosphate N-acetylglucosaminephosphotransferase that operates in the biosynthetic pathway of dolichol-linked oligosaccharides, the glycan precursors employed in protein asparagine (N)-glycosylation. The assembly of dolichol-linked oligosaccharides begins on the cytosolic side of the endoplasmic reticulum membrane and finishes in its lumen. The sequential addition of sugars to dolichol pyrophosphate produces dolichol-linked oligosaccharides containing fourteen sugars, including two GlcNAcs, nine mannoses and three glucoses. Once assembled, the oligosaccharide is transferred from the lipid to nascent proteins by oligosaccharyltransferases. Catalyzes the initial step of dolichol-linked oligosaccharide biosynthesis, transfering GlcNAc-1-P from cytosolic UDP-GlcNAc onto the carrier lipid dolichyl phosphate (P-dolichol), yielding GlcNAc-P-P-dolichol embedded in the cytoplasmic leaflet of the endoplasmic reticulum membrane. The chain is UDP-N-acetylglucosamine--dolichyl-phosphate N-acetylglucosaminephosphotransferase from Bos taurus (Bovine).